We begin with the raw amino-acid sequence, 137 residues long: NADH-ubiquinone oxidoreductase chain 3 (137 aa).

Helical transmembrane passes span 6–26 (LFIL…LIFA), 57–77 (FFIF…TFPF), and 86–106 (IYGL…FVYE).

The protein belongs to the complex I subunit 3 family.

It localises to the mitochondrion membrane. It carries out the reaction a ubiquinone + NADH + 5 H(+)(in) = a ubiquinol + NAD(+) + 4 H(+)(out). Functionally, core subunit of the mitochondrial membrane respiratory chain NADH dehydrogenase (Complex I) that is believed to belong to the minimal assembly required for catalysis. Complex I functions in the transfer of electrons from NADH to the respiratory chain. The immediate electron acceptor for the enzyme is believed to be ubiquinone. This chain is NADH-ubiquinone oxidoreductase chain 3 (ND3), found in Podospora anserina (strain S / ATCC MYA-4624 / DSM 980 / FGSC 10383) (Pleurage anserina).